The chain runs to 727 residues: 5'-AMP-activated serine/threonine-protein kinase catalytic subunit alpha (727 aa).

The Protein kinase domain maps to 31-284; it reads YRLDKTLGIG…IHEIRNHPWF (254 aa). Residues 37–45 and Lys-60 each bind ATP; that span reads LGIGSFGKV. Asp-154 acts as the Proton acceptor in catalysis. Phosphothreonine is present on Thr-188. Positions 382–590 are disordered; that stretch reads FTTTTGFNPS…GSNNNSYEGG (209 aa). Low complexity-rich tracts occupy residues 391 to 483 and 494 to 586; these read SNSN…SSIS and NLNN…NNNS. The KA1 domain maps to 679–727; that stretch reads RMVNGKPIKLVLQLFRVAENRYLLDIKKIEGEIFIFFDICSLMLEELNL.

The protein belongs to the protein kinase superfamily. CAMK Ser/Thr protein kinase family. SNF1 subfamily. Heterotrimer of an alpha catalytic subunit, a beta and a gamma non-catalytic subunits.

It catalyses the reaction L-seryl-[protein] + ATP = O-phospho-L-seryl-[protein] + ADP + H(+). The catalysed reaction is L-threonyl-[protein] + ATP = O-phospho-L-threonyl-[protein] + ADP + H(+). Activated enzyme phosphorylates target proteins and initiates downstream signaling pathways that shift metabolism from anabolic to catabolic pathways. Acts as a highly sensitive cellular energy sensor. The sequence is that of 5'-AMP-activated serine/threonine-protein kinase catalytic subunit alpha (snfA) from Dictyostelium discoideum (Social amoeba).